Here is a 634-residue protein sequence, read N- to C-terminus: Threonine--tRNA ligase (634 aa).

The region spanning 1–61 (MINITLPDGS…DHDASLRIIT (61 aa)) is the TGS domain. Residues 243-534 (DHRRIGKAQD…LIEHHAGAFP (292 aa)) are catalytic. Zn(2+) contacts are provided by C334, H385, and H511.

This sequence belongs to the class-II aminoacyl-tRNA synthetase family. Homodimer. The cofactor is Zn(2+).

It localises to the cytoplasm. The enzyme catalyses tRNA(Thr) + L-threonine + ATP = L-threonyl-tRNA(Thr) + AMP + diphosphate + H(+). Its function is as follows. Catalyzes the attachment of threonine to tRNA(Thr) in a two-step reaction: L-threonine is first activated by ATP to form Thr-AMP and then transferred to the acceptor end of tRNA(Thr). Also edits incorrectly charged L-seryl-tRNA(Thr). The polypeptide is Threonine--tRNA ligase (Xanthomonas euvesicatoria pv. vesicatoria (strain 85-10) (Xanthomonas campestris pv. vesicatoria)).